Here is a 305-residue protein sequence, read N- to C-terminus: Sulfate adenylyltransferase subunit 2 (305 aa).

It belongs to the PAPS reductase family. CysD subfamily. As to quaternary structure, heterodimer composed of CysD, the smaller subunit, and CysN.

It carries out the reaction sulfate + ATP + H(+) = adenosine 5'-phosphosulfate + diphosphate. Its pathway is sulfur metabolism; hydrogen sulfide biosynthesis; sulfite from sulfate: step 1/3. In terms of biological role, with CysN forms the ATP sulfurylase (ATPS) that catalyzes the adenylation of sulfate producing adenosine 5'-phosphosulfate (APS) and diphosphate, the first enzymatic step in sulfur assimilation pathway. APS synthesis involves the formation of a high-energy phosphoric-sulfuric acid anhydride bond driven by GTP hydrolysis by CysN coupled to ATP hydrolysis by CysD. The protein is Sulfate adenylyltransferase subunit 2 of Azotobacter vinelandii (strain DJ / ATCC BAA-1303).